Here is a 473-residue protein sequence, read N- to C-terminus: Glutamyl-tRNA reductase (473 aa).

Substrate contacts are provided by residues 49-52 (TCNR), S109, 114-116 (ESQ), and Q120. C50 acts as the Nucleophile in catalysis. The tract at residues 196-215 (LDGGGVAAEGPRHAVTPEPP) is disordered. 226 to 231 (GAGAVG) is a binding site for NADP(+).

The protein belongs to the glutamyl-tRNA reductase family. Homodimer.

It catalyses the reaction (S)-4-amino-5-oxopentanoate + tRNA(Glu) + NADP(+) = L-glutamyl-tRNA(Glu) + NADPH + H(+). The protein operates within porphyrin-containing compound metabolism; protoporphyrin-IX biosynthesis; 5-aminolevulinate from L-glutamyl-tRNA(Glu): step 1/2. Functionally, catalyzes the NADPH-dependent reduction of glutamyl-tRNA(Glu) to glutamate 1-semialdehyde (GSA). The polypeptide is Glutamyl-tRNA reductase (Frankia casuarinae (strain DSM 45818 / CECT 9043 / HFP020203 / CcI3)).